The sequence spans 317 residues: Membrane-associated protein VIPP1, chloroplastic (317 aa).

Residues 92-246 are a coiled coil; the sequence is EMNDDLTKMR…SQAEALGQLA (155 aa). The tract at residues 265–317 is disordered; that stretch reads DLAQMKKEISGSSSKGELPPGRTAVSNSGAARPFRDIEIENELNELRKKANEY. Over residues 297 to 317 the composition is skewed to basic and acidic residues; sequence PFRDIEIENELNELRKKANEY.

Belongs to the PspA/Vipp/IM30 family. Homomultimer. Complex formation involves interaction via the central alpha-helical domain (71-286). In terms of assembly, (Microbial infection) Interacts with the rice tungro bacilliform virus (RTBV) capsid protein.

The protein localises to the plastid. It is found in the chloroplast inner membrane. It localises to the chloroplast thylakoid membrane. Required for plastid vesicle formation and thylakoid membrane biogenesis, but not for functional assembly of thylakoid protein complexes. The polypeptide is Membrane-associated protein VIPP1, chloroplastic (Oryza sativa subsp. japonica (Rice)).